Here is a 437-residue protein sequence, read N- to C-terminus: Probable E3 ubiquitin-protein ligase TRIML2 (437 aa).

Residues 14-55 form a B box-type zinc finger; sequence TEDAYCETHLEPTRLFCDVDQITLCSKCFQSQEHKHHMVCGI. Residues Cys19, His22, Cys41, and His47 each coordinate Zn(2+). Residues 55 to 200 are a coiled coil; sequence IQEAAENYRK…IVELEKKCGE (146 aa). The B30.2/SPRY domain maps to 231–429; sequence DLSLCHIRGL…DSLTILQHGP (199 aa).

The enzyme catalyses S-ubiquitinyl-[E2 ubiquitin-conjugating enzyme]-L-cysteine + [acceptor protein]-L-lysine = [E2 ubiquitin-conjugating enzyme]-L-cysteine + N(6)-ubiquitinyl-[acceptor protein]-L-lysine.. The protein operates within protein modification; protein ubiquitination. The polypeptide is Probable E3 ubiquitin-protein ligase TRIML2 (Homo sapiens (Human)).